The primary structure comprises 797 residues: MQVSYKWLKELVPNLRATSAELEQKMSTSGIEVEGVTSPMEGLSKLVVGEILSSEDIPDTHLHITQVNVGAEESLQIVCGAPNVRVGMKVIVALVGARIADNYKIKKGKIRGVESLGMLCALDEIGIDEKINPMKHEDGIFEMPADAKVGDSIFSYLDMDDEIIELSITPNRADALSMHGAAWEVGAIYGLPVQLEKKDLVEASESAASKIAVKVETDKVPTYKIRLIEGVKIAKSPQWLQNRLMNAGVKPINNVVDVTNYVLMAFGQPLHSFDFSKFGSDEILVRQAKAGEKMTTLDHVERELDDSDIVVTANGLPVALGGVMGGADSEITDETTSVALEAALFDGTSIRKTSQKFALRSEASSRFEKGINEGTVREALDFAAAMIVELAGGKVLSGVVESNDYQPILPKVSITLSRVNSALGTDLSLETVEKIFVQLGFGVEVEGEKFTCEIPSRRWDIHIEADLVEEVARIYGYDNLPSTLPSSQNAGELTQMQKFRRTVRTGLESSGLNEVIGYSLVTPEKATEFVGQLETTTLMMPMTEDRQTLRANMIPGLLDIVNYNQNRKNADVAIYEIGNIFLPNPDDIRPIEVPNLAFAISGNVVDKSYNGQAVPVDFYYAKGIVENLLEAYKEVEFIPSNNQAAMHPGRTAVIKINGRVAGFVGQIHPATAKKYDIAETYVAGLDMQVMLEELPAQTIFTDIPKVQAVHRDIALLIDAEVTHAQIVSVIKSSRIKTLSQVELFDIYQGKNLPAGKKSMAYSLTFQPVENTMTDEEITAAVNKITKNLVEKLDIEIR.

The tRNA-binding domain occupies 40–154 (MEGLSKLVVG…ADAKVGDSIF (115 aa)). Residues 407-482 (PILPKVSITL…RIYGYDNLPS (76 aa)) form the B5 domain. Residues D460, D466, E469, and E470 each coordinate Mg(2+). An FDX-ACB domain is found at 704 to 797 (PKVQAVHRDI…LVEKLDIEIR (94 aa)).

It belongs to the phenylalanyl-tRNA synthetase beta subunit family. Type 1 subfamily. Tetramer of two alpha and two beta subunits. Requires Mg(2+) as cofactor.

It is found in the cytoplasm. The enzyme catalyses tRNA(Phe) + L-phenylalanine + ATP = L-phenylalanyl-tRNA(Phe) + AMP + diphosphate + H(+). The polypeptide is Phenylalanine--tRNA ligase beta subunit (Lactococcus lactis subsp. lactis (strain IL1403) (Streptococcus lactis)).